The chain runs to 396 residues: Na(+)/H(+) antiporter NhaA (396 aa).

11 helical membrane-spanning segments follow: residues Ala14–Leu34, Leu59–Val79, Thr95–Phe115, Ala124–Leu144, Val154–Phe174, Gln178–Asn198, Ile205–His225, Ala254–Val274, Gly278–Val298, Ile328–Leu348, and Leu363–Ser383.

The protein belongs to the NhaA Na(+)/H(+) (TC 2.A.33) antiporter family.

The protein localises to the cell inner membrane. The enzyme catalyses Na(+)(in) + 2 H(+)(out) = Na(+)(out) + 2 H(+)(in). Na(+)/H(+) antiporter that extrudes sodium in exchange for external protons. The protein is Na(+)/H(+) antiporter NhaA of Aeromonas salmonicida (strain A449).